Reading from the N-terminus, the 236-residue chain is Small ribosomal subunit protein uS2c (236 aa).

This sequence belongs to the universal ribosomal protein uS2 family.

The protein localises to the plastid. It is found in the chloroplast. The polypeptide is Small ribosomal subunit protein uS2c (rps2) (Chaetosphaeridium globosum (Charophycean green alga)).